A 352-amino-acid polypeptide reads, in one-letter code: Biotin synthase (352 aa).

One can recognise a Radical SAM core domain in the interval 44–262 (NRVQVSTLLS…LAVARILMPK (219 aa)). 3 residues coordinate [4Fe-4S] cluster: cysteine 59, cysteine 63, and cysteine 66. The [2Fe-2S] cluster site is built by cysteine 103, cysteine 134, cysteine 194, and arginine 266.

Belongs to the radical SAM superfamily. Biotin synthase family. Homodimer. It depends on [4Fe-4S] cluster as a cofactor. The cofactor is [2Fe-2S] cluster.

It catalyses the reaction (4R,5S)-dethiobiotin + (sulfur carrier)-SH + 2 reduced [2Fe-2S]-[ferredoxin] + 2 S-adenosyl-L-methionine = (sulfur carrier)-H + biotin + 2 5'-deoxyadenosine + 2 L-methionine + 2 oxidized [2Fe-2S]-[ferredoxin]. It functions in the pathway cofactor biosynthesis; biotin biosynthesis; biotin from 7,8-diaminononanoate: step 2/2. Functionally, catalyzes the conversion of dethiobiotin (DTB) to biotin by the insertion of a sulfur atom into dethiobiotin via a radical-based mechanism. This Pseudomonas putida (strain ATCC 47054 / DSM 6125 / CFBP 8728 / NCIMB 11950 / KT2440) protein is Biotin synthase.